The chain runs to 412 residues: Divalent metal cation transporter MntH (412 aa).

Over 1 to 19 (MTNYRVESSSGRAARKTRL) the chain is Cytoplasmic. Residues 20–39 (ALMGPAFIAAIGYIDPGNFA) traverse the membrane as a helical segment. Residues 40–51 (TNIQAGASFGYQ) lie on the Periplasmic side of the membrane. Residues 52–71 (LLWVVVWANLMAMLIQILSA) traverse the membrane as a helical segment. Residues 72–95 (KLGIATGKNLAEQIRDHYPRPVVW) lie on the Cytoplasmic side of the membrane. The chain crosses the membrane as a helical span at residues 96-118 (FYWVQAEIIAMATDLAEFIGAAI). Residues 119 to 125 (GFKLILG) lie on the Periplasmic side of the membrane. A helical transmembrane segment spans residues 126 to 145 (VSLLQGAVLTGIATFLILML). At 146–155 (QRRGQKPLEK) the chain is on the cytoplasmic side. The chain crosses the membrane as a helical span at residues 156–175 (VIGGLLLFVAAAYIVELIFS). Residues 176–196 (QPNLAQLGKGMVIPSLPTSEA) are Periplasmic-facing. A helical membrane pass occupies residues 197–220 (VFLAAGVLGATIMPHVIYLHSSLT). The Cytoplasmic portion of the chain corresponds to 221 to 238 (QHLHGGSRQQRYSATKWD). A helical membrane pass occupies residues 239–258 (VAIAMTIAGFVNLAMMATAA). The Periplasmic portion of the chain corresponds to 259-276 (AAFHFSGHTGVADLDEAY). Residues 277–297 (LTLQPLLSHAAATVFGLSLVA) traverse the membrane as a helical segment. Topologically, residues 298 to 327 (AGLSSTVVGTLAGQVVMQGFIRFHIPLWVR) are cytoplasmic. Residues 328–344 (RTVTMLPSFIVILMGLD) traverse the membrane as a helical segment. Residues 345–350 (PTRILV) are Periplasmic-facing. The helical transmembrane segment at 351 to 370 (MSQVLLSFGIALALVPLLIF) threads the bilayer. Topologically, residues 371–387 (TSDSKLMGDLVNSKRVK) are cytoplasmic. A helical transmembrane segment spans residues 388-406 (QTGWVIVVLVVALNIWLLV). Over 407–412 (GTALGL) the chain is Periplasmic.

The protein belongs to the NRAMP family.

It is found in the cell inner membrane. H(+)-stimulated, divalent metal cation uptake system. The protein is Divalent metal cation transporter MntH of Escherichia coli O9:H4 (strain HS).